The following is a 91-amino-acid chain: Protein translocase subunit SecG (91 aa).

2 helical membrane passes run 16–36 (HTFL…VVLL) and 71–91 (LTII…YLGM).

The protein belongs to the SecG family. Component of the Sec protein translocase complex. Heterotrimer consisting of SecY, SecE and SecG subunits. The heterotrimers can form oligomers, although 1 heterotrimer is thought to be able to translocate proteins. Interacts with SecDF, and other proteins may be involved. The channel interacts with SecA via subunit SecY. Also part of the accessory SecA2/SecY2 protein translocation apparatus required to export cell wall protein GspB.

The protein localises to the cell membrane. Subunit of the protein translocation channel SecYEG. While not essential, it considerably increases the export efficiency of extracellular proteins. This Staphylococcus aureus (strain NCTC 8325 / PS 47) protein is Protein translocase subunit SecG.